Reading from the N-terminus, the 495-residue chain is uncharacterized protein (495 aa).

FAD contacts are provided by Ser16, Glu36, Trp45, Asp56, Tyr62, and Val105.

It belongs to the FAD-binding monooxygenase family. FAD serves as cofactor.

This is an uncharacterized protein from Mycobacterium tuberculosis (strain CDC 1551 / Oshkosh).